Reading from the N-terminus, the 300-residue chain is Secreted mono- and diacylglycerol lipase LIP4 (300 aa).

The N-terminal stretch at 1–16 is a signal peptide; the sequence is MRFLAFLLCLVPLALC. A disulfide bridge links cysteine 54 with cysteine 293. Catalysis depends on serine 167, which acts as the Nucleophile. Aspartate 224 is a catalytic residue.

This sequence belongs to the AB hydrolase superfamily. Lipase family. Class 3 subfamily.

It is found in the secreted. The enzyme catalyses a monoacylglycerol + H2O = glycerol + a fatty acid + H(+). The catalysed reaction is a diacylglycerol + H2O = a monoacylglycerol + a fatty acid + H(+). Functionally, secreted lipase involved in Dandruff and seborrheic dermatitis (D/SD) probably via lipase-mediated breakdown of sebaceous lipids and release of irritating free fatty acids. Shows activity against monoglyceride and diglyceride substrates. Due to an absence of fatty acid synthase genes in Malassezia species, secretory lipases are essential for the yeast to generate free fatty acids from degradation of sebum and assimilate them as lipid sources for growth. Plays an essential role at the pathogen-host interface during disease progression. This Malassezia restricta (Seborrheic dermatitis infection agent) protein is Secreted mono- and diacylglycerol lipase LIP4.